Consider the following 113-residue polypeptide: Colicin-E1* immunity protein (113 aa).

This protein is able to protect a cell, which harbors the plasmid pKY-1 encoding colicin E1*, against colicin E1*. The chain is Colicin-E1* immunity protein (imm) from Shigella sonnei.